Here is a 730-residue protein sequence, read N- to C-terminus: Catalase-peroxidase (730 aa).

Positions 1 to 11 are enriched in basic and acidic residues; it reads MDAKTDDKDAG. An N-terminal signal peptide occupies residues 1–21; that stretch reads MDAKTDDKDAGKCPFSSGSHA. The segment at 1–24 is disordered; that stretch reads MDAKTDDKDAGKCPFSSGSHAHRN. The tryptophyl-tyrosyl-methioninium (Trp-Tyr) (with M-244) cross-link spans 96–218; that stretch reads WHSAGTYRIS…LGAVQMGLIY (123 aa). The Proton acceptor role is filled by His-97. Residues 218 to 244 constitute a cross-link (tryptophyl-tyrosyl-methioninium (Tyr-Met) (with W-96)); it reads YVNPEGPNGNPDPVGSAKDIRETFYRM. Position 259 (His-259) interacts with heme b.

This sequence belongs to the peroxidase family. Peroxidase/catalase subfamily. Homodimer or homotetramer. Requires heme b as cofactor. Post-translationally, formation of the three residue Trp-Tyr-Met cross-link is important for the catalase, but not the peroxidase activity of the enzyme.

The enzyme catalyses H2O2 + AH2 = A + 2 H2O. It catalyses the reaction 2 H2O2 = O2 + 2 H2O. Its function is as follows. Bifunctional enzyme with both catalase and broad-spectrum peroxidase activity. In Rhodopseudomonas palustris (strain BisA53), this protein is Catalase-peroxidase.